The chain runs to 306 residues: Protein YIPF1 (306 aa).

Topologically, residues 1 to 119 (MAAVDDLQFE…VRLYIRSNPD (119 aa)) are cytoplasmic. Residues 33-59 (PSVSFKHQPRPPGSLGREEDEELLGTN) form a disordered region. Residues 50 to 59 (EEDEELLGTN) show a composition bias toward acidic residues. A helical transmembrane segment spans residues 120–140 (LYGPFWICATLVFAIAISGNL). At 141 to 162 (SNFLIHLGEKTYHYVPEFQKVS) the chain is on the lumenal side. A helical membrane pass occupies residues 163–183 (IAATVIYAYAWLVPLALWGFL). At 184–200 (LWRNSKVMNIVSYSFLE) the chain is on the cytoplasmic side. Residues 201-221 (IVCVYGYSLFIYIPTAVLWII) traverse the membrane as a helical segment. The Lumenal segment spans residues 222-227 (PQRVIR). A helical transmembrane segment spans residues 228 to 248 (WVLVTIALGISGSVLAMTFWP). Residues 249–256 (AVREDNRR) lie on the Cytoplasmic side of the membrane. A helical transmembrane segment spans residues 257-277 (VALATIVTIMLLHVLLSVGCL). At 278–306 (AYFFDAPEMDHLPAAITTPNQTVAAAKSS) the chain is on the lumenal side. Asn297 carries N-linked (GlcNAc...) asparagine glycosylation.

This sequence belongs to the YIP1 family. In terms of assembly, interacts with YIPF6; this interaction may stabilize YIPF1. May also form a ternary complex with YIPF2 and YIPF6.

It localises to the golgi apparatus. The protein localises to the cis-Golgi network membrane. The protein resides in the trans-Golgi network membrane. It is found in the late endosome membrane. The protein is Protein YIPF1 (Yipf1) of Rattus norvegicus (Rat).